Consider the following 362-residue polypeptide: Peptide chain release factor 1 (362 aa).

An N5-methylglutamine modification is found at Q237. Positions 289–308 (AAEISDTRRNLLGSGDRSDR) are disordered.

It belongs to the prokaryotic/mitochondrial release factor family. In terms of processing, methylated by PrmC. Methylation increases the termination efficiency of RF1.

Its subcellular location is the cytoplasm. Its function is as follows. Peptide chain release factor 1 directs the termination of translation in response to the peptide chain termination codons UAG and UAA. The polypeptide is Peptide chain release factor 1 (Vibrio cholerae serotype O1 (strain ATCC 39541 / Classical Ogawa 395 / O395)).